The chain runs to 120 residues: Large ribosomal subunit protein uL22 (120 aa).

It belongs to the universal ribosomal protein uL22 family. Part of the 50S ribosomal subunit.

Its function is as follows. This protein binds specifically to 23S rRNA; its binding is stimulated by other ribosomal proteins, e.g. L4, L17, and L20. It is important during the early stages of 50S assembly. It makes multiple contacts with different domains of the 23S rRNA in the assembled 50S subunit and ribosome. The globular domain of the protein is located near the polypeptide exit tunnel on the outside of the subunit, while an extended beta-hairpin is found that lines the wall of the exit tunnel in the center of the 70S ribosome. The protein is Large ribosomal subunit protein uL22 of Corynebacterium kroppenstedtii (strain DSM 44385 / JCM 11950 / CIP 105744 / CCUG 35717).